Here is a 157-residue protein sequence, read N- to C-terminus: Small ribosomal subunit protein uS7 (157 aa).

It belongs to the universal ribosomal protein uS7 family. As to quaternary structure, part of the 30S ribosomal subunit. Contacts proteins S9 and S11.

One of the primary rRNA binding proteins, it binds directly to 16S rRNA where it nucleates assembly of the head domain of the 30S subunit. Is located at the subunit interface close to the decoding center, probably blocks exit of the E-site tRNA. In Marinomonas sp. (strain MWYL1), this protein is Small ribosomal subunit protein uS7.